An 826-amino-acid polypeptide reads, in one-letter code: Ribonucleoside-diphosphate reductase large subunit (826 aa).

Residues Thr-171, 186–187 (SC), Gly-217, 387–391 (NLCAE), and 594–598 (PTSGC) contribute to the substrate site. Cys-187 and Cys-403 form a disulfide bridge. The active-site Proton acceptor is the Asn-387. Cys-389 acts as the Cysteine radical intermediate in catalysis. The active-site Proton acceptor is the Glu-391. Residues 747-769 (SVPREEQNERSPAEQMPPRPMEP) form a disordered region. Basic and acidic residues predominate over residues 749 to 758 (PREEQNERSP).

Belongs to the ribonucleoside diphosphate reductase large chain family. As to quaternary structure, heterotetramer composed of a homodimer of the large subunit (R1) and a homodimer of the small subunit (R2). Larger multisubunit protein complex are also active, composed of (R1)n(R2)n.

It carries out the reaction a 2'-deoxyribonucleoside 5'-diphosphate + [thioredoxin]-disulfide + H2O = a ribonucleoside 5'-diphosphate + [thioredoxin]-dithiol. In terms of biological role, ribonucleoside-diphosphate reductase holoenzyme provides the precursors necessary for viral DNA synthesis. Allows virus growth in non-dividing cells, as well as reactivation from latency in infected hosts. Catalyzes the biosynthesis of deoxyribonucleotides from the corresponding ribonucleotides. The chain is Ribonucleoside-diphosphate reductase large subunit from Homo sapiens (Human).